The primary structure comprises 176 residues: Small ribosomal subunit protein uS5c (176 aa).

An S5 DRBM domain is found at 26 to 89; the sequence is LVERLIKISR…TDGRKNLIEL (64 aa).

It belongs to the universal ribosomal protein uS5 family. Part of the 30S ribosomal subunit. Contacts protein S4.

Its subcellular location is the plastid. The protein resides in the chloroplast. Its function is as follows. With S4 and S12 plays an important role in translational accuracy. This is Small ribosomal subunit protein uS5c (rps5) from Phaeodactylum tricornutum (strain CCAP 1055/1).